A 348-amino-acid polypeptide reads, in one-letter code: Protein RecA (348 aa).

66-73 provides a ligand contact to ATP; it reads GPESSGKT.

It belongs to the RecA family.

It localises to the cytoplasm. Its function is as follows. Can catalyze the hydrolysis of ATP in the presence of single-stranded DNA, the ATP-dependent uptake of single-stranded DNA by duplex DNA, and the ATP-dependent hybridization of homologous single-stranded DNAs. It interacts with LexA causing its activation and leading to its autocatalytic cleavage. The polypeptide is Protein RecA (Legionella pneumophila).